The following is a 92-amino-acid chain: Small ribosomal subunit protein uS19c (92 aa).

Belongs to the universal ribosomal protein uS19 family.

It localises to the plastid. In terms of biological role, protein S19 forms a complex with S13 that binds strongly to the 16S ribosomal RNA. The sequence is that of Small ribosomal subunit protein uS19c from Aneura mirabilis (Parasitic liverwort).